The sequence spans 121 residues: Small ribosomal subunit protein bS16 (121 aa).

A disordered region spans residues 80 to 121 (AGVREKTERNNPNKAKPGKKAQERAEEKAAKAAEAAEAADAE). Basic and acidic residues-rich tracts occupy residues 81-90 (GVREKTERNN) and 99-110 (KAQERAEEKAAK).

The protein belongs to the bacterial ribosomal protein bS16 family.

This chain is Small ribosomal subunit protein bS16, found in Ruegeria sp. (strain TM1040) (Silicibacter sp.).